Reading from the N-terminus, the 40-residue chain is Natriuretic peptide PtNP-a (40 aa).

A disulfide bridge connects residues C9 and C25. The span at 17 to 34 shows a compositional bias: polar residues; sequence ISNTSGMGCRNPIQNRPK. Positions 17 to 40 are disordered; that stretch reads ISNTSGMGCRNPIQNRPKSTPGGS.

Belongs to the natriuretic peptide family. Expressed by the venom gland.

The protein localises to the secreted. In terms of biological role, snake venom natriuretic peptide that targets NPR1 and possibly NPR2. Exhibits hypotensive and vasodepressor activities. Recombinant PtNP-a demonstrates a dose-dependent stimulation of cGMP production via the natriuretic peptide receptor 1 (NPR1) (EC(50)=563 nM) in Madine Darby Canine Kidney (MDCK) cells. It also inhibits the angiotensin converting enzyme (ACE). The chain is Natriuretic peptide PtNP-a from Pseudonaja textilis (Eastern brown snake).